We begin with the raw amino-acid sequence, 282 residues long: Shikimate dehydrogenase (NADP(+)) (282 aa).

Shikimate-binding positions include serine 15–serine 17 and threonine 62. Lysine 66 serves as the catalytic Proton acceptor. Shikimate-binding residues include asparagine 87 and aspartate 103. Residues glycine 127–alanine 131, asparagine 151–lysine 156, and methionine 220 contribute to the NADP(+) site. Tyrosine 222 contributes to the shikimate binding site. Glycine 244 provides a ligand contact to NADP(+).

Belongs to the shikimate dehydrogenase family. In terms of assembly, homodimer.

The enzyme catalyses shikimate + NADP(+) = 3-dehydroshikimate + NADPH + H(+). Its pathway is metabolic intermediate biosynthesis; chorismate biosynthesis; chorismate from D-erythrose 4-phosphate and phosphoenolpyruvate: step 4/7. Functionally, involved in the biosynthesis of the chorismate, which leads to the biosynthesis of aromatic amino acids. Catalyzes the reversible NADPH linked reduction of 3-dehydroshikimate (DHSA) to yield shikimate (SA). This Shewanella putrefaciens (strain CN-32 / ATCC BAA-453) protein is Shikimate dehydrogenase (NADP(+)).